A 185-amino-acid chain; its full sequence is Probable dehydrin LEA (185 aa).

Composition is skewed to basic and acidic residues over residues 1-10 (MADLRDEKGN) and 44-55 (QHKESTTSDIAE). The disordered stretch occupies residues 1–185 (MADLRDEKGN…LPGHHNHNHP (185 aa)). Positions 67-94 (AAAPAGAGAATAATATGVSAGTGATTTG) are enriched in low complexity. A compositionally biased stretch (basic and acidic residues) spans 130 to 146 (KEKIKEKFGSGKHKDEQ). Over residues 147–159 (TPATATTTGPATT) the composition is skewed to low complexity. Positions 161 to 177 (QPHEKKGILEKIKDKLP) are enriched in basic and acidic residues.

It belongs to the plant dehydrin family.

The protein is Probable dehydrin LEA (LEA) of Arabidopsis thaliana (Mouse-ear cress).